Consider the following 795-residue polypeptide: Lon protease (795 aa).

The 198-residue stretch at 17–214 (YPLMPLRDIV…KVYKFLQDEI (198 aa)) folds into the Lon N-terminal domain. 370 to 377 (GPPGVGKT) contacts ATP. Positions 605–787 (KPLVGVATGL…EEVFKIALVR (183 aa)) constitute a Lon proteolytic domain. Active-site residues include serine 692 and lysine 735.

Belongs to the peptidase S16 family. In terms of assembly, homohexamer. Organized in a ring with a central cavity.

The protein resides in the cytoplasm. It catalyses the reaction Hydrolysis of proteins in presence of ATP.. Its function is as follows. ATP-dependent serine protease that mediates the selective degradation of mutant and abnormal proteins as well as certain short-lived regulatory proteins. Required for cellular homeostasis and for survival from DNA damage and developmental changes induced by stress. Degrades polypeptides processively to yield small peptide fragments that are 5 to 10 amino acids long. Binds to DNA in a double-stranded, site-specific manner. This is Lon protease from Aquifex aeolicus (strain VF5).